Consider the following 424-residue polypeptide: Kynureninase (424 aa).

Pyridoxal 5'-phosphate contacts are provided by residues leucine 106, threonine 107, 134–137, aspartate 219, histidine 222, and tyrosine 244; that span reads FPSD. An N6-(pyridoxal phosphate)lysine modification is found at lysine 245. 2 residues coordinate pyridoxal 5'-phosphate: tryptophan 274 and asparagine 302.

This sequence belongs to the kynureninase family. Homodimer. Pyridoxal 5'-phosphate is required as a cofactor.

The enzyme catalyses L-kynurenine + H2O = anthranilate + L-alanine + H(+). It catalyses the reaction 3-hydroxy-L-kynurenine + H2O = 3-hydroxyanthranilate + L-alanine + H(+). It functions in the pathway amino-acid degradation; L-kynurenine degradation; L-alanine and anthranilate from L-kynurenine: step 1/1. The protein operates within cofactor biosynthesis; NAD(+) biosynthesis; quinolinate from L-kynurenine: step 2/3. Functionally, catalyzes the cleavage of L-kynurenine (L-Kyn) and L-3-hydroxykynurenine (L-3OHKyn) into anthranilic acid (AA) and 3-hydroxyanthranilic acid (3-OHAA), respectively. This chain is Kynureninase, found in Xanthomonas campestris pv. campestris (strain B100).